Here is an 867-residue protein sequence, read N- to C-terminus: DNA mismatch repair protein MutS (867 aa).

609 to 616 (GPNMSGKS) lines the ATP pocket.

Belongs to the DNA mismatch repair MutS family.

This protein is involved in the repair of mismatches in DNA. It is possible that it carries out the mismatch recognition step. This protein has a weak ATPase activity. This is DNA mismatch repair protein MutS from Latilactobacillus sakei subsp. sakei (strain 23K) (Lactobacillus sakei subsp. sakei).